Here is a 289-residue protein sequence, read N- to C-terminus: Diaminopimelate epimerase (289 aa).

Positions 11 and 78 each coordinate substrate. Cys-87 serves as the catalytic Proton donor. Residues 88-89, Asn-163, Asn-199, and 217-218 contribute to the substrate site; these read GN and ER. Cys-226 (proton acceptor) is an active-site residue. Residue 227–228 participates in substrate binding; the sequence is GT.

It belongs to the diaminopimelate epimerase family. In terms of assembly, homodimer.

It localises to the cytoplasm. The enzyme catalyses (2S,6S)-2,6-diaminopimelate = meso-2,6-diaminopimelate. The protein operates within amino-acid biosynthesis; L-lysine biosynthesis via DAP pathway; DL-2,6-diaminopimelate from LL-2,6-diaminopimelate: step 1/1. Catalyzes the stereoinversion of LL-2,6-diaminopimelate (L,L-DAP) to meso-diaminopimelate (meso-DAP), a precursor of L-lysine and an essential component of the bacterial peptidoglycan. The chain is Diaminopimelate epimerase from Rhodococcus jostii (strain RHA1).